Here is a 60-residue protein sequence, read N- to C-terminus: Large ribosomal subunit protein bL32 (60 aa).

The segment at 1 to 23 is disordered; that stretch reads MAVPRNRHSNARKNIRRSHHAKK.

This sequence belongs to the bacterial ribosomal protein bL32 family.

The sequence is that of Large ribosomal subunit protein bL32 from Chlamydia caviae (strain ATCC VR-813 / DSM 19441 / 03DC25 / GPIC) (Chlamydophila caviae).